The sequence spans 78 residues: DNA-directed RNA polymerase subunit omega (78 aa).

It belongs to the RNA polymerase subunit omega family. As to quaternary structure, the RNAP catalytic core consists of 2 alpha, 1 beta, 1 beta' and 1 omega subunit. When a sigma factor is associated with the core the holoenzyme is formed, which can initiate transcription.

It catalyses the reaction RNA(n) + a ribonucleoside 5'-triphosphate = RNA(n+1) + diphosphate. Its function is as follows. Promotes RNA polymerase assembly. Latches the N- and C-terminal regions of the beta' subunit thereby facilitating its interaction with the beta and alpha subunits. This is DNA-directed RNA polymerase subunit omega from Desulfovibrio desulfuricans (strain ATCC 27774 / DSM 6949 / MB).